We begin with the raw amino-acid sequence, 336 residues long: NAC domain-containing protein 100 (336 aa).

Residues Leu16–Lys166 enclose the NAC domain. The DNA-binding element occupies Val113–Lys172. The disordered stretch occupies residues Arg313–Tyr336.

The protein localises to the nucleus. Functionally, binds to the promoter regions of genes involved in chlorophyll catabolic processes, such as NYC1, SGR1, SGR2 and PAO. This chain is NAC domain-containing protein 100, found in Arabidopsis thaliana (Mouse-ear cress).